The following is a 444-amino-acid chain: ATP-dependent RNA helicase sub2 (444 aa).

A Q motif motif is present at residues 59–87 (TGFREFLLKPELLRAISWCGFEHPSEVQQ). Positions 90-265 (IPQAILGTDV…KKFMQNPLEI (176 aa)) constitute a Helicase ATP-binding domain. 103-110 (AKSGLGKT) serves as a coordination point for ATP. The DECD box motif lies at 212–215 (DECD). One can recognise a Helicase C-terminal domain in the interval 277-438 (GLQQYYIKLE…EYPEGGVDSA (162 aa)).

This sequence belongs to the DEAD box helicase family. DECD subfamily.

It localises to the nucleus. The catalysed reaction is ATP + H2O = ADP + phosphate + H(+). ATP-binding RNA helicase involved in transcription elongation and required for the export of mRNA out of the nucleus. SUB2 also plays a role in pre-mRNA splicing and spliceosome assembly. May be involved in rDNA and telomeric silencing, and maintenance of genome integrity. This is ATP-dependent RNA helicase sub2 (sub2) from Sclerotinia sclerotiorum (strain ATCC 18683 / 1980 / Ss-1) (White mold).